We begin with the raw amino-acid sequence, 313 residues long: Fructose-1,6-bisphosphatase class 1 (313 aa).

E91, D112, L114, and D115 together coordinate Mg(2+). Substrate contacts are provided by residues 115–118 (DGSS), Y223, and K254. E260 contributes to the Mg(2+) binding site.

The protein belongs to the FBPase class 1 family. In terms of assembly, homotetramer. Mg(2+) is required as a cofactor.

The protein resides in the cytoplasm. The enzyme catalyses beta-D-fructose 1,6-bisphosphate + H2O = beta-D-fructose 6-phosphate + phosphate. Its pathway is carbohydrate biosynthesis; gluconeogenesis. The protein is Fructose-1,6-bisphosphatase class 1 of Geobacter sulfurreducens (strain ATCC 51573 / DSM 12127 / PCA).